The sequence spans 215 residues: Thiamine-phosphate synthase (215 aa).

Residues 40-44 and asparagine 72 contribute to the 4-amino-2-methyl-5-(diphosphooxymethyl)pyrimidine site; that span reads QLRIK. Residues aspartate 73 and aspartate 92 each coordinate Mg(2+). Serine 111 serves as a coordination point for 4-amino-2-methyl-5-(diphosphooxymethyl)pyrimidine. Residue 137–139 participates in 2-[(2R,5Z)-2-carboxy-4-methylthiazol-5(2H)-ylidene]ethyl phosphate binding; that stretch reads TTT. Residue lysine 140 coordinates 4-amino-2-methyl-5-(diphosphooxymethyl)pyrimidine. 2-[(2R,5Z)-2-carboxy-4-methylthiazol-5(2H)-ylidene]ethyl phosphate-binding positions include glycine 169 and 189-190; that span reads VS.

The protein belongs to the thiamine-phosphate synthase family. Mg(2+) serves as cofactor.

It catalyses the reaction 2-[(2R,5Z)-2-carboxy-4-methylthiazol-5(2H)-ylidene]ethyl phosphate + 4-amino-2-methyl-5-(diphosphooxymethyl)pyrimidine + 2 H(+) = thiamine phosphate + CO2 + diphosphate. It carries out the reaction 2-(2-carboxy-4-methylthiazol-5-yl)ethyl phosphate + 4-amino-2-methyl-5-(diphosphooxymethyl)pyrimidine + 2 H(+) = thiamine phosphate + CO2 + diphosphate. The catalysed reaction is 4-methyl-5-(2-phosphooxyethyl)-thiazole + 4-amino-2-methyl-5-(diphosphooxymethyl)pyrimidine + H(+) = thiamine phosphate + diphosphate. Its pathway is cofactor biosynthesis; thiamine diphosphate biosynthesis; thiamine phosphate from 4-amino-2-methyl-5-diphosphomethylpyrimidine and 4-methyl-5-(2-phosphoethyl)-thiazole: step 1/1. Condenses 4-methyl-5-(beta-hydroxyethyl)thiazole monophosphate (THZ-P) and 2-methyl-4-amino-5-hydroxymethyl pyrimidine pyrophosphate (HMP-PP) to form thiamine monophosphate (TMP). The protein is Thiamine-phosphate synthase of Proteus mirabilis (strain HI4320).